We begin with the raw amino-acid sequence, 469 residues long: Glutamate--tRNA ligase (469 aa).

A 'HIGH' region motif is present at residues Pro11–Asn21. A compositionally biased stretch (basic and acidic residues) spans Gly118–Pro131. A disordered region spans residues Gly118 to Pro138. Positions Lys243–Arg247 match the 'KMSKS' region motif. Lys246 serves as a coordination point for ATP.

Belongs to the class-I aminoacyl-tRNA synthetase family. Glutamate--tRNA ligase type 1 subfamily. As to quaternary structure, monomer.

The protein localises to the cytoplasm. The enzyme catalyses tRNA(Glu) + L-glutamate + ATP = L-glutamyl-tRNA(Glu) + AMP + diphosphate. Catalyzes the attachment of glutamate to tRNA(Glu) in a two-step reaction: glutamate is first activated by ATP to form Glu-AMP and then transferred to the acceptor end of tRNA(Glu). This Burkholderia thailandensis (strain ATCC 700388 / DSM 13276 / CCUG 48851 / CIP 106301 / E264) protein is Glutamate--tRNA ligase.